Reading from the N-terminus, the 312-residue chain is 2,3-dihydroxyphenylpropionate/2,3-dihydroxicinnamic acid 1,2-dioxygenase 1 (312 aa).

Histidine 115 functions as the Proton donor in the catalytic mechanism. Histidine 179 functions as the Proton acceptor in the catalytic mechanism.

The protein belongs to the LigB/MhpB extradiol dioxygenase family. As to quaternary structure, homotetramer. Fe(2+) serves as cofactor.

It catalyses the reaction 3-(2,3-dihydroxyphenyl)propanoate + O2 = (2Z,4E)-2-hydroxy-6-oxonona-2,4-dienedioate + H(+). The catalysed reaction is (2E)-3-(2,3-dihydroxyphenyl)prop-2-enoate + O2 = (2Z,4E,7E)-2-hydroxy-6-oxonona-2,4,7-trienedioate + H(+). It functions in the pathway aromatic compound metabolism; 3-phenylpropanoate degradation. Catalyzes the non-heme iron(II)-dependent oxidative cleavage of 2,3-dihydroxyphenylpropionic acid and 2,3-dihydroxicinnamic acid into 2-hydroxy-6-ketononadienedioate and 2-hydroxy-6-ketononatrienedioate, respectively. The protein is 2,3-dihydroxyphenylpropionate/2,3-dihydroxicinnamic acid 1,2-dioxygenase 1 of Dechloromonas aromatica (strain RCB).